The primary structure comprises 310 residues: Glutaminase (310 aa).

Substrate-binding residues include serine 67, asparagine 118, glutamate 161, asparagine 168, tyrosine 192, tyrosine 244, and valine 262.

It belongs to the glutaminase family. Homotetramer.

It carries out the reaction L-glutamine + H2O = L-glutamate + NH4(+). This Legionella pneumophila (strain Lens) protein is Glutaminase.